The primary structure comprises 129 residues: Phosphoribosyl-AMP cyclohydrolase (129 aa).

Residue Asp85 participates in Mg(2+) binding. Cys86 is a binding site for Zn(2+). Asp87 and Asp89 together coordinate Mg(2+). 2 residues coordinate Zn(2+): Cys102 and Cys109.

Belongs to the PRA-CH family. In terms of assembly, homodimer. Mg(2+) is required as a cofactor. Requires Zn(2+) as cofactor.

Its subcellular location is the cytoplasm. It catalyses the reaction 1-(5-phospho-beta-D-ribosyl)-5'-AMP + H2O = 1-(5-phospho-beta-D-ribosyl)-5-[(5-phospho-beta-D-ribosylamino)methylideneamino]imidazole-4-carboxamide. Its pathway is amino-acid biosynthesis; L-histidine biosynthesis; L-histidine from 5-phospho-alpha-D-ribose 1-diphosphate: step 3/9. Its function is as follows. Catalyzes the hydrolysis of the adenine ring of phosphoribosyl-AMP. This is Phosphoribosyl-AMP cyclohydrolase from Methanococcus maripaludis (strain C5 / ATCC BAA-1333).